An 819-amino-acid chain; its full sequence is Leucine--tRNA ligase (819 aa).

Residues 40-51 carry the 'HIGH' region motif; that stretch reads PYPSGAGLHVGH. The 'KMSKS' region motif lies at 600–604; it reads KMSKS. Position 603 (Lys603) interacts with ATP.

This sequence belongs to the class-I aminoacyl-tRNA synthetase family.

The protein resides in the cytoplasm. It carries out the reaction tRNA(Leu) + L-leucine + ATP = L-leucyl-tRNA(Leu) + AMP + diphosphate. The protein is Leucine--tRNA ligase of Chlamydia muridarum (strain MoPn / Nigg).